Reading from the N-terminus, the 54-residue chain is Large ribosomal subunit protein bL33 (54 aa).

The protein belongs to the bacterial ribosomal protein bL33 family.

This chain is Large ribosomal subunit protein bL33, found in Corynebacterium glutamicum (strain R).